A 590-amino-acid chain; its full sequence is uncharacterized protein (590 aa).

2 disordered regions span residues 306-329 and 528-590; these read IAEP…GIPY and QPAP…LMNL. Positions 543–563 are enriched in pro residues; the sequence is PSLPQPVPEPLAPQEPPPPGT.

This is an uncharacterized protein from Ictaluridae (bullhead catfishes).